Reading from the N-terminus, the 587-residue chain is tRNA (guanine(37)-N(1))-methyltransferase 2 (587 aa).

S-adenosyl-L-methionine contacts are provided by residues Arg360 and 430 to 431; that span reads DA. The segment at 446-469 is disordered; the sequence is ASTRSRKEDVTNKDGNHVTPTEPM. The segment covering 450 to 461 has biased composition (basic and acidic residues); that stretch reads SRKEDVTNKDGN. An S-adenosyl-L-methionine-binding site is contributed by Asn478.

The protein belongs to the class I-like SAM-binding methyltransferase superfamily. TRM5/TYW2 family. As to quaternary structure, monomer.

The protein resides in the mitochondrion matrix. It localises to the nucleus. It is found in the cytoplasm. It catalyses the reaction guanosine(37) in tRNA + S-adenosyl-L-methionine = N(1)-methylguanosine(37) in tRNA + S-adenosyl-L-homocysteine + H(+). Specifically methylates the N1 position of guanosine-37 in various cytoplasmic and mitochondrial tRNAs. Methylation is not dependent on the nature of the nucleoside 5' of the target nucleoside. This is the first step in the biosynthesis of wybutosine (yW), a modified base adjacent to the anticodon of tRNAs and required for accurate decoding. This is tRNA (guanine(37)-N(1))-methyltransferase 2 from Phaeodactylum tricornutum (strain CCAP 1055/1).